A 535-amino-acid polypeptide reads, in one-letter code: Ankyrin repeat domain-containing protein 34C (535 aa).

ANK repeat units lie at residues 10–39, 43–80, 84–114, and 118–147; these read TDGN…YINE, KGET…DPNI, SGKT…DPSL, and TGAS…AKGK. 2 disordered regions span residues 159–181 and 214–237; these read SGTK…DRHS and AGHP…RKVS. The segment covering 216–225 has biased composition (polar residues); that stretch reads HPSSCNTSKA. Ser301 is subject to Phosphoserine. Residues 381 to 444 are disordered; the sequence is DLDIQPGPDP…RRRPPHLLER (64 aa). Residue Ser447 is modified to Phosphoserine.

The protein belongs to the ANKRD34 family.

This Homo sapiens (Human) protein is Ankyrin repeat domain-containing protein 34C (ANKRD34C).